Consider the following 1530-residue polypeptide: Coiled-coil domain-containing protein 141 (1530 aa).

A Phosphothreonine modification is found at Thr91. Coiled-coil stretches lie at residues 642 to 706, 758 to 783, and 861 to 970; these read VKNE…EALM, VKEKSQQLKDLIHFHQKQKERIQDYE, and SNVS…KTSD. Residues 1210 to 1241 are disordered; sequence SPDDISLPPLPGSPESPLAPSDMEVEEPVSSS. Residues 1409–1530 form the Ig-like domain; it reads PNFSRLLSNV…VSLMYWLLTQ (122 aa).

Interacts with DISC1. Interacts preferentially with phosphorylated forms of myosin regulatory light chain (MRLC). Interacts (via the N-terminal region) with HDAC6; inhibits the deacetylase activity of HDAC6. Interacts with KIBRA (via the C-terminal region); retains AMPAR in the cytosol after internalization. Post-translationally, ubiquitinated and degradated by the CDC20-APC/C pathway. During brain development, CDC20-APC/C complex degrades CCDC141 after centrosome translocation into the dilated area. CCDC141 is restabilized in the dilation until the centrosome enters the dilation, at which point it is once again immediately destabilized by CDC20-APC/C complex. The oscillatory regulation of CCDC141 protein is needed for proper cortical migration. In terms of processing, phosphorylation at Thr-91 by PLK1 affects CCDC141 degradation.

It is found in the cytoplasm. Its subcellular location is the cytoskeleton. The protein resides in the microtubule organizing center. The protein localises to the centrosome. In terms of biological role, plays a critical role in cortical radial and GnRH neurons migration during brain development. Regulates cortical radial migration by negatively controlling the activity of histone deacetylase 6 (HDAC6) and promotes centrosome maturation. CAMDI is required for dilation formation of cortical neurons during radial migration. Plays a critical role in learning and memory performance through regulation of AMPA-selective glutamate receptors (AMPARs) cell surface expression in competition with KIBRA. The polypeptide is Coiled-coil domain-containing protein 141 (CCDC141) (Homo sapiens (Human)).